We begin with the raw amino-acid sequence, 230 residues long: Androgen-dependent TFPI-regulating protein (230 aa).

Residues 1–7 are Cytoplasmic-facing; sequence MTKTTTC. A helical membrane pass occupies residues 8–28; it reads VYHFLVLNWYIFLNYHIPQIG. Residues 29–45 lie on the Extracellular side of the membrane; the sequence is RNEEKLREFHDGGRSKY. A helical transmembrane segment spans residues 46 to 66; it reads LTLLNLLLQAIFFGVACLDDV. At 67–85 the chain is on the cytoplasmic side; sequence LKRVIGRKDIKFVTSFRDL. A helical membrane pass occupies residues 86-106; that stretch reads LFTTMAFPISTFVFLVFWTLF. Over 107 to 120 the chain is Extracellular; sequence HYDRSLVYPKGLDD. A helical transmembrane segment spans residues 121 to 141; the sequence is FFPAWVNHAMHTSIFPFSLFE. The Cytoplasmic segment spans residues 142 to 154; it reads TILRPHNYPSKKL. Residues 155 to 175 traverse the membrane as a helical segment; that stretch reads GLTLLGAFNFAYIIRILWRYV. Topologically, residues 176–190 are extracellular; that stretch reads QTGNWVYPVFDSLSP. Residues 191–211 traverse the membrane as a helical segment; sequence LGIIIFFSAAYILVAGIYLFG. Over 212–230 the chain is Cytoplasmic; the sequence is EKINHWKWGAIAKPQMKKN.

This sequence belongs to the AIG1 family.

The protein resides in the cell membrane. The enzyme catalyses 9-hexadecanoyloxy-octadecanoate + H2O = 9-hydroxy-octadecanoate + hexadecanoate + H(+). It carries out the reaction 12-hexadecanoyloxy-octadecanoate + H2O = 12-hydroxyoctadecanoate + hexadecanoate + H(+). The catalysed reaction is 9-(9Z-hexadecenoyloxy)-octadecanoate + H2O = (9Z)-hexadecenoate + 9-hydroxy-octadecanoate + H(+). It catalyses the reaction 12-(9Z-hexadecenoyloxy)-octadecanoate + H2O = 12-hydroxyoctadecanoate + (9Z)-hexadecenoate + H(+). The enzyme catalyses 13-(9Z-hexadecenoyloxy)-octadecanoate + H2O = 13-hydroxy-octadecanoate + (9Z)-hexadecenoate + H(+). It carries out the reaction 9-octadecanoyloxy-octadecanoate + H2O = 9-hydroxy-octadecanoate + octadecanoate + H(+). The catalysed reaction is 12-octadecanoyloxy-octadecanoate + H2O = 12-hydroxyoctadecanoate + octadecanoate + H(+). It catalyses the reaction 13-octadecanoyloxy-octadecanoate + H2O = 13-hydroxy-octadecanoate + octadecanoate + H(+). The enzyme catalyses 9-(9Z-octadecenoyloxy)-octadecanoate + H2O = 9-hydroxy-octadecanoate + (9Z)-octadecenoate + H(+). It carries out the reaction 12-(9Z-octadecenoyloxy)-octadecanoate + H2O = 12-hydroxyoctadecanoate + (9Z)-octadecenoate + H(+). The catalysed reaction is 13-(9Z-octadecenoyloxy)-octadecanoate + H2O = 13-hydroxy-octadecanoate + (9Z)-octadecenoate + H(+). It catalyses the reaction 5-(9Z-octadecenoyloxy)-octadecanoate + H2O = 5-hydroxy-octadecanoate + (9Z)-octadecenoate + H(+). In terms of biological role, hydrolyzes bioactive fatty-acid esters of hydroxy-fatty acids (FAHFAs), but not other major classes of lipids. Shows a preference for FAHFAs with branching distal from the carboxylate head group of the lipids. Regulates the expression and the cell-associated anticoagulant activity of the inhibitor TFPI in endothelial cells (in vitro). This Mus musculus (Mouse) protein is Androgen-dependent TFPI-regulating protein (Adtrp).